The sequence spans 348 residues: NADH-ubiquinone oxidoreductase chain 2 (348 aa).

The next 9 membrane-spanning stretches (helical) occupy residues 3 to 23, 60 to 80, 96 to 116, 149 to 169, 178 to 197, 202 to 219, 246 to 266, 274 to 294, and 326 to 346; these read PYVLMILLSSLGLGTTLTFAS, FLTQATAAAMILFASTTNAWM, TMFMTALALKIGLAPMHFWMP, IDPLLLTLLGVTSTLVGGWGG, ILAYSSIAHMGWMIIVIQYA, LLALGTYIIMTSAAFLTL, LVLLSLGGLPPLTGFMPKWLI, DLPIIATTMALAALISLYFYL, and LALFTMATLGLLPMTPAILTL.

It belongs to the complex I subunit 2 family.

It localises to the mitochondrion inner membrane. It carries out the reaction a ubiquinone + NADH + 5 H(+)(in) = a ubiquinol + NAD(+) + 4 H(+)(out). In terms of biological role, core subunit of the mitochondrial membrane respiratory chain NADH dehydrogenase (Complex I) that is believed to belong to the minimal assembly required for catalysis. Complex I functions in the transfer of electrons from NADH to the respiratory chain. The immediate electron acceptor for the enzyme is believed to be ubiquinone. The sequence is that of NADH-ubiquinone oxidoreductase chain 2 (MT-ND2) from Carassius auratus (Goldfish).